We begin with the raw amino-acid sequence, 32 residues long: MMCMIIRRNRFTGVHDQNLIFNVKSTDVNCLV.

This is an uncharacterized protein from Ornithodoros (relapsing fever ticks).